Reading from the N-terminus, the 461-residue chain is Phytase PHO112 (461 aa).

Intrachain disulfides connect Cys62–Cys384, Cys261–Cys274, and Cys404–Cys412. 1D-myo-inositol hexakisphosphate-binding residues include Arg72, His73, Arg76, and Ser79. The active-site Nucleophile is His73. 2 N-linked (GlcNAc...) asparagine glycosylation sites follow: Asn97 and Asn157. Residue Arg169 coordinates 1D-myo-inositol hexakisphosphate. 2 N-linked (GlcNAc...) asparagine glycosylation sites follow: Asn229 and Asn248. Lys293 is a 1D-myo-inositol hexakisphosphate binding site. Residues Asn302 and Asn313 are each glycosylated (N-linked (GlcNAc...) asparagine). 1D-myo-inositol hexakisphosphate is bound by residues His334 and Asp335. 2 N-linked (GlcNAc...) asparagine glycosylation sites follow: Asn437 and Asn452.

It belongs to the histidine acid phosphatase family. As to quaternary structure, monomer.

The protein localises to the secreted. It carries out the reaction 1D-myo-inositol hexakisphosphate + H2O = 1D-myo-inositol 1,2,4,5,6-pentakisphosphate + phosphate. The enzyme catalyses 1D-myo-inositol 1,2,4,5,6-pentakisphosphate + H2O = 1D-myo-inositol 1,2,5,6-tetrakisphosphate + phosphate. The catalysed reaction is 1D-myo-inositol 1,2,5,6-tetrakisphosphate + H2O = 1D-myo-inositol 1,2,6-trisphosphate + phosphate. It catalyses the reaction 1D-myo-inositol 1,2,6-trisphosphate + H2O = 1D-myo-inositol 1,2-bisphosphate + phosphate. It carries out the reaction 1D-myo-inositol 1,2-bisphosphate + H2O = 1D-myo-inositol 2-phosphate + phosphate. Catalyzes the phosphate monoester hydrolysis of phytic acid (myo-inositol hexakisphosphate), which results in the stepwise formation of myo-inositol pentakis-, tetrakis-, tris-, bis-, and monophosphates, as well as the liberation of inorganic phosphate. Myo-inositol 2-monophosphate is the end product. Responsible of about 25% of the phytase activity. The residual phytase activity might be contributed by other cytosolic or cellular enzymes such as acid phosphatase that also degraded the substrate phytate. Is essential for human tissue damage during infection. The chain is Phytase PHO112 (PHO112) from Candida albicans (strain SC5314 / ATCC MYA-2876) (Yeast).